The chain runs to 161 residues: Decarboxylase (161 aa).

An EthD domain is found at 29–131 (QGMSEEAYRK…VGDHENFADT (103 aa)).

It belongs to the tpcK family.

The enzyme catalyses atrochrysone carboxylate + H(+) = atrochrysone + CO2. Its pathway is secondary metabolite biosynthesis. Its function is as follows. Decarboxylase; part of the gene cluster that mediates the biosynthesis of monodictyphenone, a prenyl xanthone derivative. The pathway begins with the synthesis of atrochrysone thioester by the polyketide synthase (PKS) mdpG. The atrochrysone carboxyl ACP thioesterase mdpF then breaks the thioester bond and releases the atrochrysone carboxylic acid from mdpG. The atrochrysone carboxylic acid is then converted to atrochrysone which is further transformed into emodin anthrone by mdpH-1 and mdpH-2. Emodin is further modified to yield monodictyphenone via several steps involving mdpB, mdpC mdpJ, mdpK and mdpL. These enzymes with xptA, xptB and xptC are also proposed to be involved in the synthesis of shamixanthone from emodin. Especially, direct reduction of emodin by the short chain dehydrogenase mdpC followed by dehydration catalyzed by the scytalone dehydratase-like protein mdpB gives loss of oxygen and formation of chrysophanol intermediate in two simple steps. The sequence is that of Decarboxylase from Emericella nidulans (strain FGSC A4 / ATCC 38163 / CBS 112.46 / NRRL 194 / M139) (Aspergillus nidulans).